The primary structure comprises 711 residues: MFNVTTKTMQWGEETLTLETGKVARQADGTVIATLGETSVMANVTYAREQKPGQDFFPLTVHYQEKYYAAGKIPGGFFKREARPTEKETLTARLIDRPIRPLFVPGFKNEVLVMCTVLSHDLVNDPDIVAMIAASAALTISGVPFMGPIAGARVGYEDGEYILNPTVDDMQDLRLNPEQRLDLVVAGTKDAVMMVESEAYELTEEEMLGAVTFAHEQIQPVIDLIVSLAEETAKEPFDFTPPDYSDLYAAVKAAGEEKMRAAYAISDKQERVAAVGAAKEEIIASLTEEQQEDGNLGSALKKLESVVLRGDVVKNGRRIDGRALDQVRAIECQTGLLPRTHGSALFTRGETQGLVVTTLGTGDDEQFIDALHGNFKSNFLLHYNFPPYSVGEVGRVGSPGRREIGHGKLAWRALQAVLPAPTDFPYTIRVVSEITESNGSSSMASVCGGSLSMMDAGVPLKAPVAGVAMGLVLEEDGSYGILTDILGDEDHLGDMDFKVAGTEAGITSLQMDIKVAGITPEIMKNALAQAKAGRLHILGEMAKSLTEASEFSQHAPRIETMQVPTDKIREVIGSGGKVIREIVEVSGAKVDINDDGVIKIASANGEAIQKAYDMIHAIVAEPEEGAVYTGKVVKIVDFGAFVNFFGKRDGLVHVSQIENRRLNHPSDVLKEGQEVKVKLLGFDDRGKVRLSMKVVDQETGEEIVAEKKEAE.

Mg(2+) is bound by residues Asp-490 and Asp-496. Residues 556-615 enclose the KH domain; that stretch reads PRIETMQVPTDKIREVIGSGGKVIREIVEVSGAKVDINDDGVIKIASANGEAIQKAYDMI. One can recognise an S1 motif domain in the interval 625 to 693; that stretch reads GAVYTGKVVK…DRGKVRLSMK (69 aa).

Belongs to the polyribonucleotide nucleotidyltransferase family. Requires Mg(2+) as cofactor.

The protein resides in the cytoplasm. The enzyme catalyses RNA(n+1) + phosphate = RNA(n) + a ribonucleoside 5'-diphosphate. Functionally, involved in mRNA degradation. Catalyzes the phosphorolysis of single-stranded polyribonucleotides processively in the 3'- to 5'-direction. The protein is Polyribonucleotide nucleotidyltransferase of Ruegeria sp. (strain TM1040) (Silicibacter sp.).